The following is a 235-amino-acid chain: Sugar fermentation stimulation protein homolog (235 aa).

It belongs to the SfsA family.

This Serratia proteamaculans (strain 568) protein is Sugar fermentation stimulation protein homolog.